The sequence spans 425 residues: UPF0597 protein Moth_1414 (425 aa).

This sequence belongs to the UPF0597 family.

The polypeptide is UPF0597 protein Moth_1414 (Moorella thermoacetica (strain ATCC 39073 / JCM 9320)).